The following is a 37-amino-acid chain: Non-specific lipid-transfer protein P4 (37 aa).

It belongs to the plant LTP family.

The protein localises to the secreted. Its function is as follows. Plant non-specific lipid-transfer proteins transfer phospholipids as well as galactolipids across membranes. May play a role in wax or cutin deposition in the cell walls of expanding epidermal cells and certain secretory tissues. The polypeptide is Non-specific lipid-transfer protein P4 (Vitis sp. (Grape)).